The following is a 473-amino-acid chain: Cucurbitadienol 11-hydroxylase (473 aa).

Residues 4–24 (VVLGLATLFVAYYIHWINKWR) form a helical membrane-spanning segment. Cys422 serves as a coordination point for heme.

The protein belongs to the cytochrome P450 family. Requires heme as cofactor. In terms of tissue distribution, highly expressed in young fruits 15 days after anthesis (15-DAA). Also observed in roots.

The protein resides in the membrane. It carries out the reaction cucurbitadienol + 2 reduced [NADPH--hemoprotein reductase] + 2 O2 = 11-oxocucurbitadienol + 2 oxidized [NADPH--hemoprotein reductase] + 3 H2O + 2 H(+). The enzyme catalyses cucurbitadienol + reduced [NADPH--hemoprotein reductase] + O2 = 11-hydroxycucurbitadienol + oxidized [NADPH--hemoprotein reductase] + H2O + H(+). It catalyses the reaction 11-hydroxycucurbitadienol + reduced [NADPH--hemoprotein reductase] + O2 = 11-oxocucurbitadienol + oxidized [NADPH--hemoprotein reductase] + 2 H2O + H(+). The catalysed reaction is (24R)-24,25-dihydroxycucurbitadienol + reduced [NADPH--hemoprotein reductase] + O2 = mogrol + oxidized [NADPH--hemoprotein reductase] + H2O + H(+). It participates in secondary metabolite biosynthesis; terpenoid biosynthesis. Its function is as follows. Hydroxylase involved in the biosynthesis of cucurbitacin and mogroside tetracyclic triterpene natural products (e.g. siamenoside I and mogrosides IV, V and VI). Cucurbitacins have cytotoxic properties and exhibit deterrent taste as a defense barrier against herbivores. Mogrosides are nonsugar highly oxygenated compounds used as high-intensity zero-calorie sweeteners; they also possess pharmacological properties such as regulating immunity, lowering blood sugar and lipid levels, protecting the liver, and acting as antioxidants and antitumor agents. Catalyzes the oxidation of cucurbitadienol at the C-11 position to produce 11-oxocucurbitadienol, a possible biosynthetic intermediate from cucurbitadienol to mogrol. Also mediates the conversion of 24,25-dihydroxycucurbitadienol to mogrol. This Siraitia grosvenorii (Monk's fruit) protein is Cucurbitadienol 11-hydroxylase.